A 120-amino-acid polypeptide reads, in one-letter code: Large ribosomal subunit protein uL18 (120 aa).

Residues 1–10 (MSTPRKEQTQ) are compositionally biased toward basic and acidic residues. The segment at 1 to 25 (MSTPRKEQTQKRHRRLRRHLEGTPE) is disordered.

It belongs to the universal ribosomal protein uL18 family. Part of the 50S ribosomal subunit; part of the 5S rRNA/L5/L18/L25 subcomplex. Contacts the 5S and 23S rRNAs.

This is one of the proteins that bind and probably mediate the attachment of the 5S RNA into the large ribosomal subunit, where it forms part of the central protuberance. In Synechococcus sp. (strain RCC307), this protein is Large ribosomal subunit protein uL18.